Consider the following 189-residue polypeptide: Apolipoprotein D (189 aa).

The first 20 residues, 1–20, serve as a signal peptide directing secretion; it reads MVMLLLLLSALAGLFGAAEG. Glutamine 21 bears the Pyrrolidone carboxylic acid mark. 2 cysteine pairs are disulfide-bonded: cysteine 28-cysteine 134 and cysteine 61-cysteine 185. N-linked (GlcNAc...) (complex) asparagine glycosylation is found at asparagine 65 and asparagine 98.

This sequence belongs to the calycin superfamily. Lipocalin family. As to quaternary structure, homodimer. In plasma, also exists as a disulfide-linked heterodimer with APOA2. In terms of processing, N-glycosylated. N-glycan heterogeneity at Asn-65: Hex5HexNAc4 (major) and Hex6HexNAc5 (minor); at Asn-98: Hex5HexNAc4 (minor), dHex1Hex5HexNAc4 (major), dHex1Hex6HexNAc5 (minor) and dHex1Hex7HexNAc6 (minor). As to expression, expressed in liver, intestine, pancreas, kidney, placenta, adrenal, spleen, fetal brain tissue and tears.

It localises to the secreted. Its function is as follows. APOD occurs in the macromolecular complex with lecithin-cholesterol acyltransferase. It is probably involved in the transport and binding of bilin. Appears to be able to transport a variety of ligands in a number of different contexts. The polypeptide is Apolipoprotein D (APOD) (Homo sapiens (Human)).